The primary structure comprises 453 residues: Glutamyl-tRNA reductase (453 aa).

Residues 52–55 (TCNR), Ser105, 110–112 (EDQ), and Gln116 contribute to the substrate site. Cys53 (nucleophile) is an active-site residue. 184–189 (GAGEMA) serves as a coordination point for NADP(+). Residues 413–424 (PGLEPEPTELPT) show a composition bias toward low complexity. Residues 413–453 (PGLEPEPTELPTVPDGPEGVPEELRERMSSGMLEQFSTNDD) form a disordered region.

It belongs to the glutamyl-tRNA reductase family. Homodimer.

It carries out the reaction (S)-4-amino-5-oxopentanoate + tRNA(Glu) + NADP(+) = L-glutamyl-tRNA(Glu) + NADPH + H(+). Its pathway is porphyrin-containing compound metabolism; protoporphyrin-IX biosynthesis; 5-aminolevulinate from L-glutamyl-tRNA(Glu): step 1/2. Its function is as follows. Catalyzes the NADPH-dependent reduction of glutamyl-tRNA(Glu) to glutamate 1-semialdehyde (GSA). This chain is Glutamyl-tRNA reductase, found in Natronomonas pharaonis (strain ATCC 35678 / DSM 2160 / CIP 103997 / JCM 8858 / NBRC 14720 / NCIMB 2260 / Gabara) (Halobacterium pharaonis).